Reading from the N-terminus, the 159-residue chain is Putative pre-16S rRNA nuclease (159 aa).

The protein belongs to the YqgF nuclease family.

Its subcellular location is the cytoplasm. Functionally, could be a nuclease involved in processing of the 5'-end of pre-16S rRNA. This is Putative pre-16S rRNA nuclease from Bartonella henselae (strain ATCC 49882 / DSM 28221 / CCUG 30454 / Houston 1) (Rochalimaea henselae).